Consider the following 904-residue polypeptide: Exo-beta-D-glucosaminidase (904 aa).

Residues 1-32 form the signal peptide; the sequence is MFHRPASVRRFVTTAVALGLLSTLSTGARAGA. A disordered region spans residues 28 to 49; it reads ARAGARTHEPPPRPTTVSSTAG. The active-site Proton donor is Asp-476. Glu-545 functions as the Nucleophile in the catalytic mechanism. The segment covering 813–828 has biased composition (low complexity); it reads STTAGTDGASTTTVTV. Positions 813–833 are disordered; the sequence is STTAGTDGASTTTVTVRNTGS.

This sequence belongs to the glycosyl hydrolase 2 family. Monomer.

The protein localises to the secreted. The enzyme catalyses Hydrolysis of chitosan or chitosan oligosaccharides to remove successive D-glucosamine residues from the non-reducing termini.. Hydrolyzes chitosan and chitooligosaccharides with retention of anomeric configuration. Has no beta-mannosidase activity. The chain is Exo-beta-D-glucosaminidase from Streptomyces avermitilis (strain ATCC 31267 / DSM 46492 / JCM 5070 / NBRC 14893 / NCIMB 12804 / NRRL 8165 / MA-4680).